A 335-amino-acid chain; its full sequence is tRNA methyltransferase 10 homolog A (335 aa).

Disordered regions lie at residues Met1 to Arg91 and Val279 to Gln335. A phosphoserine mark is found at Ser22 and Ser24. Over residues Arg52–Lys62 the composition is skewed to basic and acidic residues. The stretch at Arg52 to Ser84 forms a coiled coil. The segment covering Glu63–Glu75 has biased composition (basic residues). Positions Asp88–Val279 constitute an SAM-dependent MTase TRM10-type domain. The span at Glu304–Gln319 shows a compositional bias: basic and acidic residues. The segment covering Gln320–Gln335 has biased composition (low complexity). At Ser331 the chain carries Phosphoserine.

This sequence belongs to the class IV-like SAM-binding methyltransferase superfamily. TRM10 family. In terms of assembly, interacts with tRNA. As to expression, ubiquitously expressed. Is more abundant in brain and pancreatic islets compared to other tissues (at protein level).

The protein localises to the nucleus. It localises to the nucleolus. It catalyses the reaction guanosine(9) in tRNA + S-adenosyl-L-methionine = N(1)-methylguanosine(9) in tRNA + S-adenosyl-L-homocysteine + H(+). S-adenosyl-L-methionine-dependent guanine N(1)-methyltransferase that catalyzes the formation of N(1)-methylguanine at position 9 (m1G9) in tRNAs. Probably not able to catalyze formation of N(1)-methyladenine at position 9 (m1A9) in tRNAs. This Rattus norvegicus (Rat) protein is tRNA methyltransferase 10 homolog A (Trmt10a).